A 333-amino-acid polypeptide reads, in one-letter code: Ketol-acid reductoisomerase (NADP(+)) (333 aa).

Positions 2-182 (ANIYYDSDCD…GGGRAGILET (181 aa)) constitute a KARI N-terminal Rossmann domain. Residues 25 to 28 (YGSQ), K48, S51, S53, and 83 to 86 (DTIQ) each bind NADP(+). H108 is a catalytic residue. G134 is an NADP(+) binding site. In terms of domain architecture, KARI C-terminal knotted spans 183–331 (SFREETETDL…KKLRSMMKWL (149 aa)). 4 residues coordinate Mg(2+): D191, E195, E227, and E231. Residue S252 participates in substrate binding.

This sequence belongs to the ketol-acid reductoisomerase family. It depends on Mg(2+) as a cofactor.

The catalysed reaction is (2R)-2,3-dihydroxy-3-methylbutanoate + NADP(+) = (2S)-2-acetolactate + NADPH + H(+). It carries out the reaction (2R,3R)-2,3-dihydroxy-3-methylpentanoate + NADP(+) = (S)-2-ethyl-2-hydroxy-3-oxobutanoate + NADPH + H(+). The protein operates within amino-acid biosynthesis; L-isoleucine biosynthesis; L-isoleucine from 2-oxobutanoate: step 2/4. It functions in the pathway amino-acid biosynthesis; L-valine biosynthesis; L-valine from pyruvate: step 2/4. Functionally, involved in the biosynthesis of branched-chain amino acids (BCAA). Catalyzes an alkyl-migration followed by a ketol-acid reduction of (S)-2-acetolactate (S2AL) to yield (R)-2,3-dihydroxy-isovalerate. In the isomerase reaction, S2AL is rearranged via a Mg-dependent methyl migration to produce 3-hydroxy-3-methyl-2-ketobutyrate (HMKB). In the reductase reaction, this 2-ketoacid undergoes a metal-dependent reduction by NADPH to yield (R)-2,3-dihydroxy-isovalerate. This is Ketol-acid reductoisomerase (NADP(+)) from Leptospira interrogans serogroup Icterohaemorrhagiae serovar copenhageni (strain Fiocruz L1-130).